A 583-amino-acid polypeptide reads, in one-letter code: Exonuclease 3'-5' domain-containing protein 2 (583 aa).

Residues 1–11 are Mitochondrial intermembrane-facing; that stretch reads MTRESAVATKR. The helical transmembrane segment at 12–29 threads the bilayer; that stretch reads NWAILAAGVGLVYVLVRH. At 30–583 the chain is on the cytoplasmic side; that stretch reads RHRLLCPLRR…AGLDAKIKET (554 aa). In terms of domain architecture, 3'-5' exonuclease spans 62–228; that stretch reads TTQWVLNELK…AIYQKLCRDL (167 aa). 3 residues coordinate a divalent metal cation: D83, E85, and D213. Over residues 266-281 the composition is skewed to polar residues; the sequence is GSGVTRSKGSTQSKSN. Positions 266–286 are disordered; the sequence is GSGVTRSKGSTQSKSNKWVPK.

It belongs to the EXD2 family. As to quaternary structure, homodimer. Requires Mg(2+) as cofactor. Mn(2+) is required as a cofactor.

The protein resides in the mitochondrion membrane. In terms of biological role, 3'-5' exoribonuclease required for mitochondrial metabolism. The polypeptide is Exonuclease 3'-5' domain-containing protein 2 (Drosophila melanogaster (Fruit fly)).